The primary structure comprises 214 residues: Pyridoxine/pyridoxamine 5'-phosphate oxidase (214 aa).

Residues 8–11 (RINY) and Lys-66 each bind substrate. FMN is bound by residues 61–66 (RIVLIK), 76–77 (FT), Arg-82, Lys-83, and Gln-105. Residues Tyr-123, Arg-127, and Ser-131 each coordinate substrate. FMN contacts are provided by residues 140–141 (QS) and Trp-184. Residue 190-192 (RLH) coordinates substrate. Position 194 (Arg-194) interacts with FMN.

Belongs to the pyridoxamine 5'-phosphate oxidase family. In terms of assembly, homodimer. It depends on FMN as a cofactor.

The catalysed reaction is pyridoxamine 5'-phosphate + O2 + H2O = pyridoxal 5'-phosphate + H2O2 + NH4(+). It catalyses the reaction pyridoxine 5'-phosphate + O2 = pyridoxal 5'-phosphate + H2O2. It functions in the pathway cofactor metabolism; pyridoxal 5'-phosphate salvage; pyridoxal 5'-phosphate from pyridoxamine 5'-phosphate: step 1/1. The protein operates within cofactor metabolism; pyridoxal 5'-phosphate salvage; pyridoxal 5'-phosphate from pyridoxine 5'-phosphate: step 1/1. Its function is as follows. Catalyzes the oxidation of either pyridoxine 5'-phosphate (PNP) or pyridoxamine 5'-phosphate (PMP) into pyridoxal 5'-phosphate (PLP). The chain is Pyridoxine/pyridoxamine 5'-phosphate oxidase from Burkholderia lata (strain ATCC 17760 / DSM 23089 / LMG 22485 / NCIMB 9086 / R18194 / 383).